The chain runs to 774 residues: MLSLIEQIKSGKLWDFPGGIHPFENKHQSNRQPIINASIPNELVLPLKQHIGKAGDLLVKVGDRVLKGQPLTQYTSTFMLPIHAPTSGVISAIEPRTVAHPSGLSELCIVLTPDQQEEWFELQPQPDFQQLTPETLLELIRQAGISGMGGAGFPTAKKLQSGLSRTEILIINAAECEPYITADDVLMRQYAHEIIQGIEIVEHILKPKLTIIGIEDNKPEAVAALQQAAQDKPMVIRVIPTKYPSGGEKQLIKILTNLEVPKGGIPADIGLMVQNVGSLQAIARAIVHGEPLIRRVVTLTGDCFRKPRNVWALLGTPVQALLNEFGYKADKKLPRLIMGGPMMGFTLPHAQVPITKTANCILAPTRNELTSSDNEMACIRCGQCAEACPVSLLPQQLQWHAKAEEFDKCEELDLKDCIECGACAYVCPSEIPLVQYYRQAKAEIRTRSLEAEAAERAKARFEEKKARMERDKAERENRFKQAAEDRRKEMQQQGGSDAIAAAIERVKAQKAQLEPTDNSVKPAIAAAIARAKAKQAEAAQSGASEPDNSEMAKLREERKRQARERKAQKGEVTEASTSDGADDKKSAVAAAIARAKARKAEQQETESAAQPAQATPSSDDADPKKAAVAAAIARAKARKAEQQETESTAQPAQATPSSDDADPKKAAVAAAIARAKARKAEKQETESAAQPTQATPSSDDADPKKAAVAAAIARAKARKAEQQETESAAQPTQATPSSDDADPKKAAVAAAIARAKARKAAQQSSSNLNAEEKD.

2 4Fe-4S ferredoxin-type domains span residues 368 to 398 (ELTSSDNEMACIRCGQCAEACPVSLLPQQLQ) and 408 to 437 (KCEELDLKDCIECGACAYVCPSEIPLVQYY). [4Fe-4S] cluster is bound by residues Cys-378, Cys-381, Cys-384, Cys-388, Cys-417, Cys-420, Cys-423, and Cys-427. The segment covering 459 to 490 (ARFEEKKARMERDKAERENRFKQAAEDRRKEM) has biased composition (basic and acidic residues). 2 disordered regions span residues 459 to 496 (ARFEEKKARMERDKAERENRFKQAAEDRRKEMQQQGGS) and 533 to 774 (AKQA…EEKD). A compositionally biased stretch (low complexity) spans 533–545 (AKQAEAAQSGASE). Residues 550–572 (EMAKLREERKRQARERKAQKGEV) show a composition bias toward basic and acidic residues. Residues 605–618 (TESAAQPAQATPSS) are compositionally biased toward low complexity. Polar residues-rich tracts occupy residues 645–658 (TESTAQPAQATPSS), 686–698 (ESAAQPTQATPSS), 725–738 (TESAAQPTQATPSS), and 762–774 (QQSSSNLNAEEKD).

This sequence belongs to the 4Fe4S bacterial-type ferredoxin family. RnfC subfamily. The complex is composed of six subunits: RnfA, RnfB, RnfC, RnfD, RnfE and RnfG. Requires [4Fe-4S] cluster as cofactor.

Its subcellular location is the cell inner membrane. In terms of biological role, part of a membrane-bound complex that couples electron transfer with translocation of ions across the membrane. The protein is Ion-translocating oxidoreductase complex subunit C of Vibrio cholerae serotype O1 (strain ATCC 39315 / El Tor Inaba N16961).